The following is a 2710-amino-acid chain: Serine/threonine-protein kinase ATR (2710 aa).

Positions 1647–2257 (TLAKASFRCQ…LWMMAAVSKS (611 aa)) constitute an FAT domain. The region spanning 2368-2680 (IADDAEILNS…GVNAAPSLPL (313 aa)) is the PI3K/PI4K catalytic domain. Positions 2374–2380 (ILNSLQK) are G-loop. Residues 2545 to 2553 (GLGDRHGEN) are catalytic loop. The tract at residues 2565 to 2589 (HVDFSCLFDKGLLLEKPEVVPFRFT) is activation loop. One can recognise an FATC domain in the interval 2678 to 2710 (LPLSVEGQARRLIAEAVSHSNLGKMYVWWMAWF).

Belongs to the PI3/PI4-kinase family. ATM subfamily.

It localises to the nucleus. It catalyses the reaction L-seryl-[protein] + ATP = O-phospho-L-seryl-[protein] + ADP + H(+). It carries out the reaction L-threonyl-[protein] + ATP = O-phospho-L-threonyl-[protein] + ADP + H(+). Its function is as follows. Probable serine/threonine kinase. Seems to play a central role in cell-cycle regulation by transmitting DNA damage signals to downstream effectors of cell-cycle progression. May recognize the substrate consensus sequence [ST]-Q and phosphorylate histone variant H2AX to form H2AXS139ph at sites of DNA damage, thereby regulating DNA damage response mechanism. The protein is Serine/threonine-protein kinase ATR of Oryza sativa subsp. indica (Rice).